Consider the following 541-residue polypeptide: Chaperonin GroEL 1 (541 aa).

ATP-binding positions include 29–32 (TIGP), 86–90 (DGTTT), Gly415, 479–481 (NAA), and Asp495.

This sequence belongs to the chaperonin (HSP60) family. As to quaternary structure, forms a cylinder of 14 subunits composed of two heptameric rings stacked back-to-back. Interacts with the co-chaperonin GroES.

It localises to the cytoplasm. The enzyme catalyses ATP + H2O + a folded polypeptide = ADP + phosphate + an unfolded polypeptide.. In terms of biological role, together with its co-chaperonin GroES, plays an essential role in assisting protein folding. The GroEL-GroES system forms a nano-cage that allows encapsulation of the non-native substrate proteins and provides a physical environment optimized to promote and accelerate protein folding. The polypeptide is Chaperonin GroEL 1 (Streptomyces coelicolor (strain ATCC BAA-471 / A3(2) / M145)).